Reading from the N-terminus, the 361-residue chain is uncharacterized protein (361 aa).

Residues 1-28 (MSKSKFTKIIVVICIAAMFITGTSILSF) form the signal peptide.

This is an uncharacterized protein from Ruminiclostridium cellulolyticum (strain ATCC 35319 / DSM 5812 / JCM 6584 / H10) (Clostridium cellulolyticum).